The following is a 338-amino-acid chain: Glyceraldehyde-3-phosphate dehydrogenase (338 aa).

Residues Arg12–Ile13, Asp34, and Arg80 each bind NAD(+). D-glyceraldehyde 3-phosphate-binding positions include Ser151–Thr153, Thr182, Thr211–Gly212, and Arg234. Catalysis depends on Cys152, which acts as the Nucleophile. Asn316 contributes to the NAD(+) binding site.

This sequence belongs to the glyceraldehyde-3-phosphate dehydrogenase family. Homotetramer.

The protein localises to the cytoplasm. The catalysed reaction is D-glyceraldehyde 3-phosphate + phosphate + NAD(+) = (2R)-3-phospho-glyceroyl phosphate + NADH + H(+). Its pathway is carbohydrate degradation; glycolysis; pyruvate from D-glyceraldehyde 3-phosphate: step 1/5. In Paracoccidioides lutzii (strain ATCC MYA-826 / Pb01) (Paracoccidioides brasiliensis), this protein is Glyceraldehyde-3-phosphate dehydrogenase (GPD).